A 474-amino-acid polypeptide reads, in one-letter code: MRLSKTLAGMDMADYSAALDPAYTTLEFENVQVLTMGNDTSPSEGANLNSSNSLGVSALCAICGDRATGKHYGASSCDGCKGFFRRSVRKNHMYSCRFSRQCVVDKDKRNQCRYCRLKKCFRAGMKKEAVQNERDRISTRRSSYEDSSLPSINALLQAEVLSQQITSPISGINGDIRAKKIANITDVCESMKEQLLVLVEWAKYIPAFCELLLDDQVALLRAHAGEHLLLGATKRSMVFKDVLLLGNDYIVPRHCPELAEMSRVSIRILDELVLPFQELQIDDNEYACLKAIIFFDPDAKGLSDPGKIKRLRSQVQVSLEDYINDRQYDSRGRFGELLLLLPTLQSITWQMIEQIQFIKLFGMAKIDNLLQEMLLGGSASDAPHTHHPLHPHLMQEHMGTNVIVANTMPSHLSNGQMCEWPRPRGQAATPETPQPSPPSGSGSESYKLLPGAITTIVKPPSAIPQPTITKQEAI.

Residues 57–132 constitute a DNA-binding region (nuclear receptor); that stretch reads SALCAICGDR…AGMKKEAVQN (76 aa). 2 NR C4-type zinc fingers span residues 60-80 and 96-120; these read CAIC…CDGC and CRFS…LKKC. A phosphoserine mark is found at Ser-142 and Ser-143. At Tyr-144 the chain carries Phosphotyrosine. An NR LBD domain is found at 147 to 377; sequence SSLPSINALL…NLLQEMLLGG (231 aa). Thr-166 bears the Phosphothreonine mark. Phosphoserine is present on Ser-167. Glycyl lysine isopeptide (Lys-Gly) (interchain with G-Cter in ubiquitin) cross-links involve residues Lys-234 and Lys-307. Position 313 is a phosphoserine; by AMPK (Ser-313). The short motif at 368 to 376 is the 9aaTAD element; it reads NLLQEMLLG. Positions 413–450 are disordered; it reads SNGQMCEWPRPRGQAATPETPQPSPPSGSGSESYKLLP. Thr-429 and Thr-432 each carry phosphothreonine. Ser-436 carries the post-translational modification Phosphoserine. The residue at position 458 (Lys-458) is an N6-acetyllysine.

This sequence belongs to the nuclear hormone receptor family. NR2 subfamily. Homodimerization is required for HNF4-alpha to bind to its recognition site. Interacts with CLOCK, BMAL1 and PER1. Interacts with PER2. Interacts with CRY1 and CRY2. Interacts with NR0B2/SHP; the resulting heterodimer is transcriptionally inactive. Interacts with DDX3X; this interaction disrupts the interaction between HNF4 and NR0B2 that forms inactive heterodimers and enhances the formation of active HNF4 homodimers. In terms of processing, phosphorylated on tyrosine residue(s); phosphorylation is important for its DNA-binding activity. Phosphorylation may directly or indirectly play a regulatory role in the subnuclear distribution. Phosphorylation at Ser-313 by AMPK reduces the ability to form homodimers and bind DNA. Acetylation at Lys-458 lowers transcriptional activation by about two-fold. Expressed in the liver, pancreas and colon in a circadian manner.

The protein localises to the nucleus. In terms of biological role, transcriptional regulator which controls the expression of hepatic genes during the transition of endodermal cells to hepatic progenitor cells, facilitatating the recruitment of RNA pol II to the promoters of target genes. Activates the transcription of CYP2C38. Represses the CLOCK-BMAL1 transcriptional activity and is essential for circadian rhythm maintenance and period regulation in the liver and colon cells. The protein is Hepatocyte nuclear factor 4-alpha (Hnf4a) of Mus musculus (Mouse).